A 167-amino-acid polypeptide reads, in one-letter code: Ribosome maturation factor RimM (167 aa).

The 72-residue stretch at 94–165 folds into the PRC barrel domain; sequence ENEFYYSDII…KIIITPMEGL (72 aa).

The protein belongs to the RimM family. As to quaternary structure, binds ribosomal protein uS19.

It localises to the cytoplasm. In terms of biological role, an accessory protein needed during the final step in the assembly of 30S ribosomal subunit, possibly for assembly of the head region. Essential for efficient processing of 16S rRNA. May be needed both before and after RbfA during the maturation of 16S rRNA. It has affinity for free ribosomal 30S subunits but not for 70S ribosomes. In Staphylococcus aureus (strain Mu3 / ATCC 700698), this protein is Ribosome maturation factor RimM.